Reading from the N-terminus, the 212-residue chain is Ribonuclease HII (212 aa).

Residues 1–206 (MICGVDEAGK…VKNLLHQKNQ (206 aa)) form the RNase H type-2 domain. Residues D6, E7, and D101 each contribute to the a divalent metal cation site.

This sequence belongs to the RNase HII family. Mn(2+) is required as a cofactor. It depends on Mg(2+) as a cofactor.

The protein localises to the cytoplasm. The catalysed reaction is Endonucleolytic cleavage to 5'-phosphomonoester.. In terms of biological role, endonuclease that specifically degrades the RNA of RNA-DNA hybrids. The polypeptide is Ribonuclease HII (Methanospirillum hungatei JF-1 (strain ATCC 27890 / DSM 864 / NBRC 100397 / JF-1)).